Consider the following 695-residue polypeptide: DNA ligase (695 aa).

NAD(+) contacts are provided by residues 44-48 (DAEYD), 93-94 (SL), and E124. The active-site N6-AMP-lysine intermediate is K126. Positions 147, 187, 304, and 328 each coordinate NAD(+). Zn(2+)-binding residues include C422, C425, C440, and C445. The BRCT domain occupies 606 to 695 (TVQGPLAGKT…GIEVEAAARS (90 aa)).

The protein belongs to the NAD-dependent DNA ligase family. LigA subfamily. Mg(2+) is required as a cofactor. Requires Mn(2+) as cofactor.

The catalysed reaction is NAD(+) + (deoxyribonucleotide)n-3'-hydroxyl + 5'-phospho-(deoxyribonucleotide)m = (deoxyribonucleotide)n+m + AMP + beta-nicotinamide D-nucleotide.. DNA ligase that catalyzes the formation of phosphodiester linkages between 5'-phosphoryl and 3'-hydroxyl groups in double-stranded DNA using NAD as a coenzyme and as the energy source for the reaction. It is essential for DNA replication and repair of damaged DNA. This chain is DNA ligase, found in Thermomicrobium roseum (strain ATCC 27502 / DSM 5159 / P-2).